Consider the following 534-residue polypeptide: (E)-beta-farnesene synthase (534 aa).

Mg(2+)-binding residues include Asp287, Asp291, Asn431, Ser435, and Glu439. Residues 287 to 291 (DDMMD) carry the DDXXD motif motif.

Belongs to the terpene synthase family. The cofactor is Mg(2+). Co(2+) serves as cofactor. Requires Mn(2+) as cofactor.

Its subcellular location is the cytoplasm. It catalyses the reaction (2E,6E)-farnesyl diphosphate = (E)-beta-farnesene + diphosphate. Its pathway is secondary metabolite biosynthesis; terpenoid biosynthesis. In terms of biological role, sesquiterpene cyclase catalyzing the production of beta-farnesene and alpha-bergamotene in equal amounts from farnesyl diphosphate. Involved in indirect defense by producing volatile signals attracting natural enemies of herbivores. The polypeptide is (E)-beta-farnesene synthase (Zea mays subsp. mexicana (Mexican teosinte)).